Here is a 358-residue protein sequence, read N- to C-terminus: MSENSTIVSNTANLVKFLNLDQKGSILAEYIWIDGANGVRSKTKTLFKKPSSVEDLPEWNFDGSSTGQAPGEDSDIYLRPVAIFPDPFRMGDNILVLAECWNADGSPNKFNHRHECAKIMEAHKDQKPWFGLEQEYTLFDLYGNPYGWPKGGFPGPQGPYYCGVGTGKVYCRDIVEAHYKACLFAGIKISGINAEVLPSQWEFQVGPCVGIEMGDHLWISRYLLHRVAEEFGVKISFHPKPIPGDWNGSGLHTNVSTQAMRDEGGMKAIEEAIQKLSTRHAEHIAVYGDDNTLRLTGRHETGNIDAFSYGVADRGSSIRIPRSCAKEGKGYFEDRRPASNACPYQITGIMMETICGGI.

The GS beta-grasp domain maps to 26-105 (ILAEYIWIDG…VLAECWNADG (80 aa)). The GS catalytic domain maps to 112 to 358 (HRHECAKIME…IMMETICGGI (247 aa)).

Belongs to the glutamine synthetase family. In terms of assembly, homooctamer.

It is found in the cytoplasm. It catalyses the reaction L-glutamate + NH4(+) + ATP = L-glutamine + ADP + phosphate + H(+). This Tuber borchii (White truffle) protein is Glutamine synthetase (GLN1).